Consider the following 256-residue polypeptide: Imidazole glycerol phosphate synthase subunit HisF (256 aa).

Residues aspartate 12 and aspartate 131 contribute to the active site.

It belongs to the HisA/HisF family. As to quaternary structure, heterodimer of HisH and HisF.

Its subcellular location is the cytoplasm. It catalyses the reaction 5-[(5-phospho-1-deoxy-D-ribulos-1-ylimino)methylamino]-1-(5-phospho-beta-D-ribosyl)imidazole-4-carboxamide + L-glutamine = D-erythro-1-(imidazol-4-yl)glycerol 3-phosphate + 5-amino-1-(5-phospho-beta-D-ribosyl)imidazole-4-carboxamide + L-glutamate + H(+). The protein operates within amino-acid biosynthesis; L-histidine biosynthesis; L-histidine from 5-phospho-alpha-D-ribose 1-diphosphate: step 5/9. In terms of biological role, IGPS catalyzes the conversion of PRFAR and glutamine to IGP, AICAR and glutamate. The HisF subunit catalyzes the cyclization activity that produces IGP and AICAR from PRFAR using the ammonia provided by the HisH subunit. In Thermobifida fusca (strain YX), this protein is Imidazole glycerol phosphate synthase subunit HisF.